Reading from the N-terminus, the 365-residue chain is Histidinol-phosphate aminotransferase (365 aa).

The residue at position 223 (K223) is an N6-(pyridoxal phosphate)lysine.

This sequence belongs to the class-II pyridoxal-phosphate-dependent aminotransferase family. Histidinol-phosphate aminotransferase subfamily. In terms of assembly, homodimer. The cofactor is pyridoxal 5'-phosphate.

The catalysed reaction is L-histidinol phosphate + 2-oxoglutarate = 3-(imidazol-4-yl)-2-oxopropyl phosphate + L-glutamate. It functions in the pathway amino-acid biosynthesis; L-histidine biosynthesis; L-histidine from 5-phospho-alpha-D-ribose 1-diphosphate: step 7/9. The polypeptide is Histidinol-phosphate aminotransferase (Brucella abortus (strain 2308)).